The following is a 251-amino-acid chain: Putative (5-formylfuran-3-yl)methyl phosphate synthase (251 aa).

The Schiff-base intermediate with substrate role is filled by lysine 29. Residue lysine 87 is the Proton acceptor of the active site.

This sequence belongs to the MfnB family.

It carries out the reaction 2 D-glyceraldehyde 3-phosphate = 4-(hydroxymethyl)-2-furancarboxaldehyde phosphate + phosphate + 2 H2O. In terms of biological role, catalyzes the formation of 4-(hydroxymethyl)-2-furancarboxaldehyde phosphate (4-HFC-P) from two molecules of glyceraldehyde-3-P (GA-3-P). The chain is Putative (5-formylfuran-3-yl)methyl phosphate synthase from Kitasatospora aureofaciens (Streptomyces aureofaciens).